The primary structure comprises 592 residues: Condensin-2 complex subunit H2 (592 aa).

2 disordered regions span residues 89 to 116 (NKKR…DGCE) and 261 to 285 (EAPS…PKQL). Positions 96–108 (GSSSDGNQEQAPS) are enriched in polar residues.

Belongs to the CND2 H2 (condensin-2 subunit 2) family. In terms of assembly, component of the condensin-2 complex, which contains the smc2 and smc4 heterodimer, and three non SMC subunits, ncapg2, ncaph2 and ncapd3 that probably regulate the complex.

Its subcellular location is the nucleus. Regulatory subunit of the condensin-2 complex, a complex that seems to provide chromosomes with an additional level of organization and rigidity and in establishing mitotic chromosome architecture. This is Condensin-2 complex subunit H2 (ncaph2) from Danio rerio (Zebrafish).